A 382-amino-acid polypeptide reads, in one-letter code: MSSDQLSKFLDRNKMEDNKRKVLDEEAKASLDIWKYVFGFADIAAAKCAIDLKIPEAIENHPSSQPVTLAELSSAVSASPSHLRRIMRFLVHQGIFKEIPTKDGLATGYVNTPLSRRLMITRRDGKSLAPFVLFETTPEMLAPWLRLSSVVSSPVNGSTPPPFDAVHGKDVWSFAQDNPFLSDMINEAMACDARRVVPRVAGACHGLFDGVTTMVDVGGGTGETMGMLVKEFPWIKGFNFDLPHVIEVAEVLDGVENVEGDMFDSIPACDAIFIKWVLHDWGDKDCIKILKNCKEAVPPNIGKVLIVESVIGENKKTMIVDERDEKLEHVRLMLDMVMMAHTSTGKERTLKEWDFVLKEAGFARYEVRDIDDVQSLIIAYRS.

S-adenosyl-L-homocysteine is bound by residues Gly-218, Asp-241, Asp-261, Met-262, and Lys-275. His-279 (proton acceptor) is an active-site residue. Catalysis depends on residues Glu-308 and Glu-347.

This sequence belongs to the class I-like SAM-binding methyltransferase superfamily. Cation-independent O-methyltransferase family.

It is found in the cytoplasm. The catalysed reaction is N-acetylserotonin + S-adenosyl-L-methionine = melatonin + S-adenosyl-L-homocysteine + H(+). It functions in the pathway aromatic compound metabolism; melatonin biosynthesis; melatonin from serotonin: step 1/2. Its function is as follows. Methyltransferase which catalyzes the transfer of a methyl group onto N-acetylserotonin, producing melatonin (N-acetyl-5-methoxytryptamine). Does not seem to possess caffeate O-methyltransferase activity. Implicated in melatonin-dependent circadian dynamics of stomatal aperture to minimize night water loss and promote drought tolerance. Prevents seed germination by promoting melatonin biosynthesis. Promotes melatonin-triggered defense responses to the necrotrophic fungus Botrytis cinerea. In terms of biological role, (Microbial infection) Promotes melatonin-triggered defense responses to the necrotrophic fungus Botrytis cinerea. This is Acetylserotonin O-methyltransferase from Arabidopsis thaliana (Mouse-ear cress).